The chain runs to 593 residues: ETS-related transcription factor Elf-2 (593 aa).

S107 is modified (phosphoserine). Residues 146-201 (VEVSTEESEPMDTSPIPTSPDSHEPMKKKKVGRKPKTQQSPISNGSPELGIKKKPR) are disordered. Over residues 171 to 181 (MKKKKVGRKPK) the composition is skewed to basic residues. The residue at position 182 (T182) is a Phosphothreonine. Over residues 182 to 191 (TQQSPISNGS) the composition is skewed to polar residues. A phosphoserine mark is found at S185 and S191. A DNA-binding region (ETS) is located at residues 208–290 (TYLWEFLLDL…EGQRLVYQFK (83 aa)). A phosphoserine mark is found at S363 and S372. The residue at position 376 (T376) is a Phosphothreonine. S430 bears the Phosphoserine mark. Position 494 is an omega-N-methylarginine (R494). T521 carries the phosphothreonine modification. K536 participates in a covalent cross-link: Glycyl lysine isopeptide (Lys-Gly) (interchain with G-Cter in SUMO2).

The protein belongs to the ETS family. In terms of assembly, interacts with the LIM domains of LMO2. Interacts via its N-terminal region with RUNX1. Expressed in all fetal and adult tissues examined. Among fetal tissues, highest levels of expression detected in heart, lung, liver and kidney, and lower levels in brain. Among adult tissues, highest levels of expression detected in heart, placenta, lung, skeletal muscle, spleen, thymus, testis and ovary. Moderate expression in prostate, small intestine, kidney, liver and pancreas, and weak expression in colon, brain and peripheral blood lymphocytes.

The protein resides in the nucleus. Functionally, isoform 1 transcriptionally activates the LYN and BLK promoters and acts synergistically with RUNX1 to transactivate the BLK promoter. Its function is as follows. Isoform 2 may function in repression of RUNX1-mediated transactivation. In Homo sapiens (Human), this protein is ETS-related transcription factor Elf-2.